Consider the following 116-residue polypeptide: Protein Rev (116 aa).

Position 5 is a phosphoserine; by host CK2 (S5). The interval 18–26 is homomultimerization; sequence YIKILYQSN. Residues 34–50 carry the Nuclear localization signal and RNA-binding (RRE) motif; the sequence is TRKARRNRRRRWRARQR. Residues 73–84 carry the Nuclear export signal and binding to XPO1 motif; the sequence is LQLPLLEKLHIN. Residues 90 to 116 form a disordered region; that stretch reads GQGTEKGVGSPQISVESRAVLGSGTKE. At S99 the chain carries Phosphoserine; by host.

Belongs to the HIV-1 REV protein family. Homomultimer; when bound to the RRE. Multimeric assembly is essential for activity and may involve XPO1. Binds to human KPNB1, XPO1, TNPO1, RANBP5 and IPO7. Interacts with the viral Integrase. Interacts with human KHDRBS1. Interacts with human NAP1; this interaction decreases Rev multimerization and stimulates its activity. Interacts with human DEAD-box helicases DDX3 and DDX24; these interactions may serve for viral RNA export to the cytoplasm and packaging, respectively. Interacts with human PSIP1; this interaction may inhibit HIV-1 DNA integration by promoting dissociation of the Integrase-LEDGF/p75 complex. Post-translationally, asymmetrically arginine dimethylated at one site by host PRMT6. Methylation impairs the RNA-binding activity and export of viral RNA from the nucleus to the cytoplasm. In terms of processing, phosphorylated by protein kinase CK2. Presence of, and maybe binding to the N-terminus of the regulatory beta subunit of CK2 is necessary for CK2-mediated Rev's phosphorylation.

It is found in the host nucleus. The protein localises to the host nucleolus. Its subcellular location is the host cytoplasm. Its function is as follows. Escorts unspliced or incompletely spliced viral pre-mRNAs (late transcripts) out of the nucleus of infected cells. These pre-mRNAs carry a recognition sequence called Rev responsive element (RRE) located in the env gene, that is not present in fully spliced viral mRNAs (early transcripts). This function is essential since most viral proteins are translated from unspliced or partially spliced pre-mRNAs which cannot exit the nucleus by the pathway used by fully processed cellular mRNAs. Rev itself is translated from a fully spliced mRNA that readily exits the nucleus. Rev's nuclear localization signal (NLS) binds directly to KPNB1/Importin beta-1 without previous binding to KPNA1/Importin alpha-1. KPNB1 binds to the GDP bound form of RAN (Ran-GDP) and targets Rev to the nucleus. In the nucleus, the conversion from Ran-GDP to Ran-GTP dissociates Rev from KPNB1 and allows Rev's binding to the RRE in viral pre-mRNAs. Rev multimerization on the RRE via cooperative assembly exposes its nuclear export signal (NES) to the surface. Rev can then form a complex with XPO1/CRM1 and Ran-GTP, leading to nuclear export of the complex. Conversion from Ran-GTP to Ran-GDP mediates dissociation of the Rev/RRE/XPO1/RAN complex, so that Rev can return to the nucleus for a subsequent round of export. Beside KPNB1, also seems to interact with TNPO1/Transportin-1, RANBP5/IPO5 and IPO7/RANBP7 for nuclear import. The nucleoporin-like HRB/RIP is an essential cofactor that probably indirectly interacts with Rev to release HIV RNAs from the perinuclear region to the cytoplasm. This Human immunodeficiency virus type 1 group M subtype F2 (isolate MP257) (HIV-1) protein is Protein Rev.